The chain runs to 237 residues: Uridylate kinase (237 aa).

9-12 (KFSG) is a binding site for ATP. The tract at residues 17–22 (GEAGYG) is involved in allosteric activation by GTP. G51 contacts UMP. ATP-binding residues include G52 and R56. UMP is bound by residues D72 and 133–140 (TGNPFFTT). ATP-binding residues include T160, Y166, and D169.

This sequence belongs to the UMP kinase family. In terms of assembly, homohexamer.

The protein localises to the cytoplasm. It carries out the reaction UMP + ATP = UDP + ADP. The protein operates within pyrimidine metabolism; CTP biosynthesis via de novo pathway; UDP from UMP (UMPK route): step 1/1. With respect to regulation, allosterically activated by GTP. Inhibited by UTP. Its function is as follows. Catalyzes the reversible phosphorylation of UMP to UDP. The chain is Uridylate kinase from Sulfurimonas denitrificans (strain ATCC 33889 / DSM 1251) (Thiomicrospira denitrificans (strain ATCC 33889 / DSM 1251)).